Consider the following 1372-residue polypeptide: Serine protease pic autotransporter (1372 aa).

Residues 1–55 (MNKVYSLKYCPVTGGLIAVSELARRVIKKTCRRLTHILLAGIPAICLCYSQISQA) form the signal peptide. Residues 56–301 (GIVRSDIAYQ…NVIPTDYLNQ (246 aa)) enclose the Peptidase S6 domain. Residues His-127, Asp-155, and Ser-258 each act as charge relay system in the active site. One can recognise an Autotransporter domain in the interval 1106 to 1372 (DTNGDAGAWA…AVNANFRYMF (267 aa)).

Post-translationally, cleaved to release the mature protein from the outer membrane.

It localises to the periplasm. The protein resides in the secreted. The protein localises to the cell surface. It is found in the cell outer membrane. Involved in intestinal colonization, displays in vitro mucinolytic activity, serum resistance, and hemagglutination. Important to penetrate the intestinal mucus layer. This Shigella flexneri protein is Serine protease pic autotransporter (pic).